The sequence spans 1059 residues: Carbamoyl phosphate synthase large chain (1059 aa).

The carboxyphosphate synthetic domain stretch occupies residues 1–401 (MPKRQDISKI…AMLKAVRSLE (401 aa)). R129, R169, G175, G176, R208, I210, E215, G241, I242, H243, Q284, and E298 together coordinate ATP. Positions 133 to 327 (KALMERLNEP…IAKMAAKIAV (195 aa)) constitute an ATP-grasp 1 domain. Residues Q284, E298, and N300 each contribute to the Mg(2+) site. Mn(2+) is bound by residues Q284, E298, and N300. Residues 402–546 (IGAIGLDDIT…YATYEQENES (145 aa)) are oligomerization domain. Residues 547–929 (IISTKKSVLV…ALYKAFIASN (383 aa)) form a carbamoyl phosphate synthetic domain region. Residues 671–861 (DQVIKELALP…LAQLATRVML (191 aa)) enclose the ATP-grasp 2 domain. ATP-binding residues include R707, S746, L748, E752, G777, V778, H779, S780, Q820, and E832. Mg(2+)-binding residues include Q820, E832, and N834. Positions 820, 832, and 834 each coordinate Mn(2+). An MGS-like domain is found at 930–1059 (IKVPRYGNVL…SRSFTVKEMH (130 aa)). An allosteric domain region spans residues 930-1059 (IKVPRYGNVL…SRSFTVKEMH (130 aa)).

The protein belongs to the CarB family. Composed of two chains; the small (or glutamine) chain promotes the hydrolysis of glutamine to ammonia, which is used by the large (or ammonia) chain to synthesize carbamoyl phosphate. Tetramer of heterodimers (alpha,beta)4. The cofactor is Mg(2+). Mn(2+) is required as a cofactor.

It catalyses the reaction hydrogencarbonate + L-glutamine + 2 ATP + H2O = carbamoyl phosphate + L-glutamate + 2 ADP + phosphate + 2 H(+). The catalysed reaction is hydrogencarbonate + NH4(+) + 2 ATP = carbamoyl phosphate + 2 ADP + phosphate + 2 H(+). It functions in the pathway amino-acid biosynthesis; L-arginine biosynthesis; carbamoyl phosphate from bicarbonate: step 1/1. Its pathway is pyrimidine metabolism; UMP biosynthesis via de novo pathway; (S)-dihydroorotate from bicarbonate: step 1/3. Its function is as follows. Large subunit of the glutamine-dependent carbamoyl phosphate synthetase (CPSase). CPSase catalyzes the formation of carbamoyl phosphate from the ammonia moiety of glutamine, carbonate, and phosphate donated by ATP, constituting the first step of 2 biosynthetic pathways, one leading to arginine and/or urea and the other to pyrimidine nucleotides. The large subunit (synthetase) binds the substrates ammonia (free or transferred from glutamine from the small subunit), hydrogencarbonate and ATP and carries out an ATP-coupled ligase reaction, activating hydrogencarbonate by forming carboxy phosphate which reacts with ammonia to form carbamoyl phosphate. The polypeptide is Carbamoyl phosphate synthase large chain (Leuconostoc mesenteroides subsp. mesenteroides (strain ATCC 8293 / DSM 20343 / BCRC 11652 / CCM 1803 / JCM 6124 / NCDO 523 / NBRC 100496 / NCIMB 8023 / NCTC 12954 / NRRL B-1118 / 37Y)).